The following is a 332-amino-acid chain: 2,3-diketo-L-gulonate reductase (332 aa).

The Proton donor role is filled by H44. NAD(+) contacts are provided by residues 168 to 174, 224 to 225, and 304 to 306; these read ITMVDMS, WK, and GHE.

The protein belongs to the LDH2/MDH2 oxidoreductase family. DlgD subfamily. As to quaternary structure, homodimer.

The protein localises to the cytoplasm. The catalysed reaction is 3-dehydro-L-gulonate + NAD(+) = 2,3-dioxo-L-gulonate + NADH + H(+). It catalyses the reaction 3-dehydro-L-gulonate + NADP(+) = 2,3-dioxo-L-gulonate + NADPH + H(+). Catalyzes the reduction of 2,3-diketo-L-gulonate in the presence of NADH, to form 3-keto-L-gulonate. In Mannheimia succiniciproducens (strain KCTC 0769BP / MBEL55E), this protein is 2,3-diketo-L-gulonate reductase.